The chain runs to 316 residues: Tyrosine--tRNA ligase 2 (316 aa).

Positions 26, 146, 150, 153, and 168 each coordinate L-tyrosine. Residues 219 to 223 (KMSKS) carry the 'KMSKS' region motif. Position 222 (lysine 222) interacts with ATP.

Belongs to the class-I aminoacyl-tRNA synthetase family. TyrS type 4 subfamily. As to quaternary structure, homodimer.

The protein localises to the cytoplasm. The enzyme catalyses tRNA(Tyr) + L-tyrosine + ATP = L-tyrosyl-tRNA(Tyr) + AMP + diphosphate + H(+). Catalyzes the attachment of tyrosine to tRNA(Tyr) in a two-step reaction: tyrosine is first activated by ATP to form Tyr-AMP and then transferred to the acceptor end of tRNA(Tyr). This Pyrobaculum aerophilum (strain ATCC 51768 / DSM 7523 / JCM 9630 / CIP 104966 / NBRC 100827 / IM2) protein is Tyrosine--tRNA ligase 2.